Here is a 119-residue protein sequence, read N- to C-terminus: uncharacterized protein (119 aa).

An N-terminal signal peptide occupies residues 1-23 (MVKWAVSILVNALLLIVIDGYID). 3 consecutive transmembrane segments (helical) span residues 27–47 (ISSI…NVLI), 50–70 (LLII…LFVI), and 88–108 (IDGF…HLLI).

The protein resides in the cell membrane. This is an uncharacterized protein from Bacillus subtilis (strain 168).